Reading from the N-terminus, the 314-residue chain is DNA-directed RNA polymerase subunit alpha (314 aa).

The tract at residues 1-228 (MIEIEKPKIE…EHLNIFVGLT (228 aa)) is alpha N-terminal domain (alpha-NTD). Residues 246 to 314 (EKVLEMTIEE…ELGLGLRKDD (69 aa)) are alpha C-terminal domain (alpha-CTD).

This sequence belongs to the RNA polymerase alpha chain family. As to quaternary structure, homodimer. The RNAP catalytic core consists of 2 alpha, 1 beta, 1 beta' and 1 omega subunit. When a sigma factor is associated with the core the holoenzyme is formed, which can initiate transcription.

It carries out the reaction RNA(n) + a ribonucleoside 5'-triphosphate = RNA(n+1) + diphosphate. Its function is as follows. DNA-dependent RNA polymerase catalyzes the transcription of DNA into RNA using the four ribonucleoside triphosphates as substrates. This Bacillus pumilus (strain SAFR-032) protein is DNA-directed RNA polymerase subunit alpha.